Consider the following 872-residue polypeptide: MARQITLFDFTLKKEQNKDESRKEEIPHANINEERRKPKEWIKEAEEGKSYFLLQVDYDGKKSKAICKLYDKETKKIYILYDNTGHKPYFLTDIDPEKVNKIPKVVRDPSFDHLETVIKIDPYSGNKIKLTKIVVKDPLAVRRMRNSVPKAYEAHIKYFNNYIYDLGLIPGLPYVVKKGKLEQLRPELKGEEVDEIRKAFADSDEMTKEAVNDWIPIFESEVPDVKRVAIDIEVYTPIKGRIPDPEKAEFPIISISLAGNDGTKRVLVLLREDVNSQITKHDVIVETFKSERELIRRFFDIILDYPIILTFNGDDFDIPYIYYRALKLNFTPEEIPFDIINDEGKYLAGIHIDLYKFFFNRAIRNYAFEGKYNEYNLDAVATALLGMSKVKLDTLISFLDLDKLIEYNSRDAEITLKLTTFNNNLVWKLIILLARISKMGLEELTRTEVSTWIKNLYYWEHRRRNWLIPLKEEILTRSSQIKTAAIIKGKRYKGAVVIDPPAGVFFNVVVLDFASLYPSIIRNWNISYETVDVENCKNKEYVRDETGEVLHYICKDKPGITAVITGLLRDFRVKVYKKKAKSQNISEEQRSVYDVVQRAMKVFINATYGVFGAENFPLYAPAVAESVTAIGRYVITTTVNYCRSIGLQVLYGDTDSMFLWNPSKEKLEEIIKFVKGKFGLDLEVDKVYKFVAFSGLKKNYLGVYPDGKTDIKGMLAKKRNTPEFIKKEFNEVKQLVTTINSPDDIPKIRDQLEYKIKEIYEKLRHKGYNLDELAFRVMLSKPLESYTKNTPQHVKAALQLRSYGVMVLPRDIIMFVKVKSKDGVKPVQLAKLSEIDVDKYIDAVRSTFEQILKAFGLIGANLLQLLSILSLT.

It belongs to the DNA polymerase type-B family.

The catalysed reaction is DNA(n) + a 2'-deoxyribonucleoside 5'-triphosphate = DNA(n+1) + diphosphate. This is DNA polymerase 1 (pol-alpha) from Sulfurisphaera ohwakuensis.